Consider the following 613-residue polypeptide: Transcription factor Sp2 (613 aa).

The disordered stretch occupies residues 1-32 (MSDPQTSMAATAAVSPSDYLQPAASTTQDSQP). A compositionally biased stretch (polar residues) spans 23–32 (AASTTQDSQP). At serine 78 the chain carries Phosphoserine. 2 disordered regions span residues 170–197 (SPSSHKPVPIKPAPVQKSSTTTTPAQSG) and 225–255 (PGAATQLLTESPPAPLSKTNKKARKKSLPAA). Over residues 185–197 (QKSSTTTTPAQSG) the composition is skewed to polar residues. The short motif at 361 to 369 (GEVQTVLVQ) is the 9aaTAD; inactive element. Positions 374–392 (ATAATASTTTCSSPASRAA) are enriched in low complexity. A disordered region spans residues 374–402 (ATAATASTTTCSSPASRAAHLSGTSKKHS). C2H2-type zinc fingers lie at residues 525-549 (HVCHIPDCGKTFRKTSLLRAHVRLH), 555-579 (FVCNWFFCGKRFTRSDELQRHARTH), and 585-607 (FECAQCQKRFMRSDHLTKHYKTH).

This sequence belongs to the Sp1 C2H2-type zinc-finger protein family.

The protein resides in the nucleus. Functionally, binds to GC box promoters elements and selectively activates mRNA synthesis from genes that contain functional recognition sites. The sequence is that of Transcription factor Sp2 (SP2) from Bos taurus (Bovine).